Consider the following 356-residue polypeptide: Peptide chain release factor 1 (356 aa).

Gln233 is modified (N5-methylglutamine).

This sequence belongs to the prokaryotic/mitochondrial release factor family. In terms of processing, methylated by PrmC. Methylation increases the termination efficiency of RF1.

The protein localises to the cytoplasm. In terms of biological role, peptide chain release factor 1 directs the termination of translation in response to the peptide chain termination codons UAG and UAA. This is Peptide chain release factor 1 from Syntrophotalea carbinolica (strain DSM 2380 / NBRC 103641 / GraBd1) (Pelobacter carbinolicus).